A 658-amino-acid polypeptide reads, in one-letter code: PTS system 2-O-alpha-mannosyl-D-glycerate-specific EIIABC component (658 aa).

Over Met1–Gly313 the chain is Periplasmic. Residues Thr25–Lys171 enclose the PTS EIIA type-2 domain. His87 acts as the Tele-phosphohistidine intermediate; for EIIA activity in catalysis. The residue at position 87 (His87) is a Phosphohistidine; by HPr. A PTS EIIB type-2 domain is found at Ile186 to Thr282. The active-site Phosphocysteine intermediate; for EIIB activity is the Cys192. Phosphocysteine; by EIIA is present on Cys192. The region spanning Leu306–Trp641 is the PTS EIIC type-2 domain. The helical transmembrane segment at Ile314–Leu334 threads the bilayer. Residues Ser335–Gly358 lie on the Cytoplasmic side of the membrane. A helical membrane pass occupies residues Gly359–Ala379. At Asp380–Ala389 the chain is on the periplasmic side. Residues Ala390–Ile410 traverse the membrane as a helical segment. The Cytoplasmic segment spans residues Ala411–Thr433. The chain crosses the membrane as a helical span at residues Phe434–Gly454. Over Glu455 to Ser474 the chain is Periplasmic. A helical transmembrane segment spans residues Asn475–Val495. Over Asn496–Tyr500 the chain is Cytoplasmic. A helical transmembrane segment spans residues Ala501 to Val521. Residues Lys522–Thr551 are Periplasmic-facing. The chain crosses the membrane as a helical span at residues Trp552–Leu572. A topological domain (cytoplasmic) is located at residue Arg573. Residues Val574–Ile594 traverse the membrane as a helical segment. At Gly595 to Ala620 the chain is on the periplasmic side. A helical transmembrane segment spans residues Ile621–Trp641. Residues Arg642–Pro658 lie on the Cytoplasmic side of the membrane.

The protein localises to the cell inner membrane. The enzyme catalyses (2R)-2-O-(alpha-D-mannosyl)-glycerate(out) + N(pros)-phospho-L-histidyl-[protein] = (2R)-2-O-(6-phospho-alpha-D-mannosyl)-glycerate(in) + L-histidyl-[protein]. Functionally, the phosphoenolpyruvate-dependent sugar phosphotransferase system (sugar PTS), a major carbohydrate active transport system, catalyzes the phosphorylation of incoming sugar substrates concomitantly with their translocation across the cell membrane. This system is involved in mannosyl-D-glycerate transport. Also involved in thermoinduction of ompC. In Escherichia coli (strain K12), this protein is PTS system 2-O-alpha-mannosyl-D-glycerate-specific EIIABC component.